The chain runs to 346 residues: Phosphoribosylformylglycinamidine cyclo-ligase (346 aa).

The protein belongs to the AIR synthase family.

It is found in the cytoplasm. The enzyme catalyses 2-formamido-N(1)-(5-O-phospho-beta-D-ribosyl)acetamidine + ATP = 5-amino-1-(5-phospho-beta-D-ribosyl)imidazole + ADP + phosphate + H(+). Its pathway is purine metabolism; IMP biosynthesis via de novo pathway; 5-amino-1-(5-phospho-D-ribosyl)imidazole from N(2)-formyl-N(1)-(5-phospho-D-ribosyl)glycinamide: step 2/2. This chain is Phosphoribosylformylglycinamidine cyclo-ligase, found in Alteromonas mediterranea (strain DSM 17117 / CIP 110805 / LMG 28347 / Deep ecotype).